The sequence spans 398 residues: 1-deoxy-D-xylulose 5-phosphate reductoisomerase (398 aa).

Residues Thr-10, Gly-11, Ser-12, Val-13, Gly-36, Lys-37, Asn-38, and Asn-124 each contribute to the NADPH site. Lys-125 contacts 1-deoxy-D-xylulose 5-phosphate. Glu-126 is an NADPH binding site. Mn(2+) is bound at residue Asp-150. Residues Ser-151, Glu-152, Ser-186, and His-209 each contribute to the 1-deoxy-D-xylulose 5-phosphate site. A Mn(2+)-binding site is contributed by Glu-152. Gly-215 lines the NADPH pocket. Ser-222, Asn-227, Lys-228, and Glu-231 together coordinate 1-deoxy-D-xylulose 5-phosphate. Residue Glu-231 participates in Mn(2+) binding.

It belongs to the DXR family. In terms of assembly, homodimer. The cofactor is Mg(2+). Mn(2+) serves as cofactor.

The catalysed reaction is 2-C-methyl-D-erythritol 4-phosphate + NADP(+) = 1-deoxy-D-xylulose 5-phosphate + NADPH + H(+). Its pathway is isoprenoid biosynthesis; isopentenyl diphosphate biosynthesis via DXP pathway; isopentenyl diphosphate from 1-deoxy-D-xylulose 5-phosphate: step 1/6. Catalyzes the NADPH-dependent rearrangement and reduction of 1-deoxy-D-xylulose-5-phosphate (DXP) to 2-C-methyl-D-erythritol 4-phosphate (MEP). The polypeptide is 1-deoxy-D-xylulose 5-phosphate reductoisomerase (Photorhabdus laumondii subsp. laumondii (strain DSM 15139 / CIP 105565 / TT01) (Photorhabdus luminescens subsp. laumondii)).